A 364-amino-acid polypeptide reads, in one-letter code: Zinc finger protein 474 (364 aa).

The segment covering 1-10 (MERGKKKRIS) has biased composition (basic residues). Disordered regions lie at residues 1–21 (MERGKKKRISNKLQQTFHHSK) and 37–60 (SYSSLSPETESVNPGENIKTDTQK). The C2HC/C3H-type 1 zinc-finger motif lies at 93 to 122 (GFRVCYICGREFGSQSIAIHEPQCLQKWHI). Residues cysteine 97, cysteine 100, histidine 112, and cysteine 116 each coordinate Zn(2+). Residues 127-147 (LPKHLRRPEPSKPQSLSSSGS) form a disordered region. The segment covering 138 to 147 (KPQSLSSSGS) has biased composition (low complexity). 3 C2HC/C3H-type zinc fingers span residues 164–193 (QLLPCESCGRTFLPDHLLVHHRSCKPKGEG), 220–249 (RTVICYICGKEFGTLSLPIHEPKCLEKWKM), and 283–312 (QLVFCPHCSRIFTSDRLLVHQRSCKTHPYG). Zn(2+)-binding residues include cysteine 168, cysteine 171, histidine 183, cysteine 187, cysteine 224, cysteine 227, histidine 239, cysteine 243, cysteine 287, cysteine 290, histidine 302, and cysteine 306. Residues 187 to 214 (CKPKGEGPRAPHSNSSDHLTGLKKACSG) are disordered.

Requires Zn(2+) as cofactor.

This Homo sapiens (Human) protein is Zinc finger protein 474 (ZNF474).